We begin with the raw amino-acid sequence, 195 residues long: Putative 3-methyladenine DNA glycosylase (195 aa).

This sequence belongs to the DNA glycosylase MPG family.

In Synechococcus sp. (strain JA-3-3Ab) (Cyanobacteria bacterium Yellowstone A-Prime), this protein is Putative 3-methyladenine DNA glycosylase.